The following is a 340-amino-acid chain: tRNA N6-adenosine threonylcarbamoyltransferase (340 aa).

H111 and H115 together coordinate Fe cation. Substrate contacts are provided by residues 134–138, D167, G180, and N272; that span reads LVSGG. Residue D300 participates in Fe cation binding.

This sequence belongs to the KAE1 / TsaD family. It depends on Fe(2+) as a cofactor.

The protein localises to the cytoplasm. The enzyme catalyses L-threonylcarbamoyladenylate + adenosine(37) in tRNA = N(6)-L-threonylcarbamoyladenosine(37) in tRNA + AMP + H(+). Required for the formation of a threonylcarbamoyl group on adenosine at position 37 (t(6)A37) in tRNAs that read codons beginning with adenine. Is involved in the transfer of the threonylcarbamoyl moiety of threonylcarbamoyl-AMP (TC-AMP) to the N6 group of A37, together with TsaE and TsaB. TsaD likely plays a direct catalytic role in this reaction. The sequence is that of tRNA N6-adenosine threonylcarbamoyltransferase from Proteus mirabilis (strain HI4320).